The sequence spans 329 residues: Acetyl-coenzyme A carboxylase carboxyl transferase subunit alpha (329 aa).

The region spanning 40–294 (QLETLAARRR…KNALEKHLSE (255 aa)) is the CoA carboxyltransferase C-terminal domain.

The protein belongs to the AccA family. As to quaternary structure, acetyl-CoA carboxylase is a heterohexamer composed of biotin carboxyl carrier protein (AccB), biotin carboxylase (AccC) and two subunits each of ACCase subunit alpha (AccA) and ACCase subunit beta (AccD).

The protein resides in the cytoplasm. It catalyses the reaction N(6)-carboxybiotinyl-L-lysyl-[protein] + acetyl-CoA = N(6)-biotinyl-L-lysyl-[protein] + malonyl-CoA. It functions in the pathway lipid metabolism; malonyl-CoA biosynthesis; malonyl-CoA from acetyl-CoA: step 1/1. Component of the acetyl coenzyme A carboxylase (ACC) complex. First, biotin carboxylase catalyzes the carboxylation of biotin on its carrier protein (BCCP) and then the CO(2) group is transferred by the carboxyltransferase to acetyl-CoA to form malonyl-CoA. This chain is Acetyl-coenzyme A carboxylase carboxyl transferase subunit alpha, found in Prochlorococcus marinus (strain NATL1A).